We begin with the raw amino-acid sequence, 447 residues long: Glutamate--tRNA ligase 1 (447 aa).

Residues 10–20 carry the 'HIGH' region motif; that stretch reads PSPTGMLHVGN. Positions 240-244 match the 'KMSKS' region motif; it reads KISKR. Lysine 243 contributes to the ATP binding site.

The protein belongs to the class-I aminoacyl-tRNA synthetase family. Glutamate--tRNA ligase type 1 subfamily. Monomer.

It localises to the cytoplasm. The catalysed reaction is tRNA(Glu) + L-glutamate + ATP = L-glutamyl-tRNA(Glu) + AMP + diphosphate. In terms of biological role, catalyzes the attachment of glutamate to tRNA(Glu) in a two-step reaction: glutamate is first activated by ATP to form Glu-AMP and then transferred to the acceptor end of tRNA(Glu). This is Glutamate--tRNA ligase 1 from Rickettsia conorii (strain ATCC VR-613 / Malish 7).